We begin with the raw amino-acid sequence, 255 residues long: 5'-nucleotidase SurE (255 aa).

Residues D8, D9, S40, and N93 each contribute to the a divalent metal cation site.

The protein belongs to the SurE nucleotidase family. A divalent metal cation is required as a cofactor.

It localises to the cytoplasm. The catalysed reaction is a ribonucleoside 5'-phosphate + H2O = a ribonucleoside + phosphate. Nucleotidase that shows phosphatase activity on nucleoside 5'-monophosphates. The chain is 5'-nucleotidase SurE from Rhodopseudomonas palustris (strain BisB18).